The following is a 61-amino-acid chain: MLNTFSLIGICLNSTLYSSSFFFGKLPEAYAFLNPIVDIMPVIPLFFFLLAFVWQAAVSFR.

A propeptide spanning residues 1–24 (MLNTFSLIGICLNSTLYSSSFFFG) is cleaved from the precursor. Residues 36 to 56 (IVDIMPVIPLFFFLLAFVWQA) form a helical membrane-spanning segment.

Belongs to the PsbK family. PSII is composed of 1 copy each of membrane proteins PsbA, PsbB, PsbC, PsbD, PsbE, PsbF, PsbH, PsbI, PsbJ, PsbK, PsbL, PsbM, PsbT, PsbX, PsbY, PsbZ, Psb30/Ycf12, at least 3 peripheral proteins of the oxygen-evolving complex and a large number of cofactors. It forms dimeric complexes.

The protein resides in the plastid. The protein localises to the chloroplast thylakoid membrane. One of the components of the core complex of photosystem II (PSII). PSII is a light-driven water:plastoquinone oxidoreductase that uses light energy to abstract electrons from H(2)O, generating O(2) and a proton gradient subsequently used for ATP formation. It consists of a core antenna complex that captures photons, and an electron transfer chain that converts photonic excitation into a charge separation. This is Photosystem II reaction center protein K from Solanum bulbocastanum (Wild potato).